A 442-amino-acid polypeptide reads, in one-letter code: Protein IQ-DOMAIN 33 (442 aa).

Positions 159-188 constitute an IQ domain; sequence EEDAAVIIQSAFRSYLAIRRSKEEEETFAK. The disordered stretch occupies residues 184–212; the sequence is ETFAKEESFSGEESQDNASMGTSLEAQTG. The span at 199–212 shows a compositional bias: polar residues; the sequence is DNASMGTSLEAQTG. Residues 270–282 are calmodulin-binding; the sequence is RERALAYAFSQQL. Residues 375–442 form a disordered region; sequence EKSSFKPSIS…ETSHKLNSST (68 aa). The segment covering 383–402 has biased composition (basic residues); the sequence is ISKRKSVPSYKSQRKHHKLQ. A Nuclear localization signal motif is present at residues 385 to 392; sequence KRKSVPSY.

The protein belongs to the IQD family. In terms of assembly, binds to multiple calmodulin (CaM) in the presence of Ca(2+) and CaM-like proteins.

The protein resides in the nucleus. May be involved in cooperative interactions with calmodulins or calmodulin-like proteins. Recruits calmodulin proteins to microtubules, thus being a potential scaffold in cellular signaling and trafficking. May associate with nucleic acids and regulate gene expression at the transcriptional or post-transcriptional level. The chain is Protein IQ-DOMAIN 33 from Arabidopsis thaliana (Mouse-ear cress).